A 687-amino-acid chain; its full sequence is Cytochrome b/c1 (687 aa).

A helical transmembrane segment spans residues 46 to 66; sequence FGAILSFMLGMQILTGVILAM. Heme b contacts are provided by His-96 and His-110. Transmembrane regions (helical) follow at residues 126–146 and 160–180; these read VLWI…FMGY and VITN…TLLW. Heme b contacts are provided by His-197 and His-211. 6 helical membrane-spanning segments follow: residues 199-219, 247-267, 305-325, 337-357, 363-383, and 410-430; these read LLPF…HVAG, FGVA…PNYL, LAGV…PWLD, LAKQ…YLGA, IYVI…LIVL, and AVAS…GSLQ. The segment at 404–434 is internal signal sequence; the sequence is LAKGGKAVASVAIALVAAGALFLGSLQDARA. One can recognise a Cytochrome c domain in the interval 458–643; the sequence is GALQRGLKVY…TVAQYSKDVT (186 aa). Heme c-binding residues include Cys-471, Cys-474, His-475, and Met-616. The chain crosses the membrane as a helical span at residues 666 to 678; the sequence is VFLIIFAGLMYFT.

It belongs to the cytochrome b family. As to quaternary structure, the main subunits of complex b-c1 are: cytochrome b, cytochrome c1 and the Rieske protein. Heme b serves as cofactor. The cofactor is heme c. Post-translationally, the protein is post-translationally processed into cytochrome b and c1. This occurs by processing between residues 434 and 435 without processing between cytochrome b and the N-terminal of the putative signal sequence domain.

The protein resides in the cell inner membrane. In terms of biological role, component of the ubiquinol-cytochrome c reductase complex (complex III or cytochrome b-c1 complex), which is a respiratory chain that generates an electrochemical potential coupled to ATP synthesis. c1 functions as an electron donor to cytochrome c. The protein is Cytochrome b/c1 (fbcH) of Bradyrhizobium diazoefficiens (strain JCM 10833 / BCRC 13528 / IAM 13628 / NBRC 14792 / USDA 110).